The chain runs to 283 residues: Bifunctional protein FolD 1 (283 aa).

Residues 166–168 (GRS) and I232 each bind NADP(+).

This sequence belongs to the tetrahydrofolate dehydrogenase/cyclohydrolase family. As to quaternary structure, homodimer.

The enzyme catalyses (6R)-5,10-methylene-5,6,7,8-tetrahydrofolate + NADP(+) = (6R)-5,10-methenyltetrahydrofolate + NADPH. The catalysed reaction is (6R)-5,10-methenyltetrahydrofolate + H2O = (6R)-10-formyltetrahydrofolate + H(+). It participates in one-carbon metabolism; tetrahydrofolate interconversion. Functionally, catalyzes the oxidation of 5,10-methylenetetrahydrofolate to 5,10-methenyltetrahydrofolate and then the hydrolysis of 5,10-methenyltetrahydrofolate to 10-formyltetrahydrofolate. This is Bifunctional protein FolD 1 from Lactobacillus johnsonii (strain CNCM I-12250 / La1 / NCC 533).